Consider the following 112-residue polypeptide: UPF0060 membrane protein Mpe_A1656 (112 aa).

Helical transmembrane passes span 9–29 (GLFFVTAVAEIVGCYLPWLVL), 34–54 (SAWLLVPAAASLAVFAWLLTL), 65–85 (AYGGVYVVVALLWLWRVDGVV), and 91–111 (LVGGAICLAGMAIIALQPRAA).

It belongs to the UPF0060 family.

It is found in the cell inner membrane. In Methylibium petroleiphilum (strain ATCC BAA-1232 / LMG 22953 / PM1), this protein is UPF0060 membrane protein Mpe_A1656.